Here is a 111-residue protein sequence, read N- to C-terminus: Rubredoxin (111 aa).

The region spanning 11–62 (LDRFECRSCGYVYEPEKGDNKHDIAPETPFAELPINWRCPVCTAKKAAFTNI) is the Rubredoxin-like domain. Residues cysteine 16, cysteine 19, cysteine 49, and cysteine 52 each coordinate Fe cation.

It belongs to the rubredoxin family. Fe(3+) serves as cofactor.

Its function is as follows. Rubredoxin is a small nonheme, iron protein lacking acid-labile sulfide. Its single Fe, chelated to 4 Cys, functions as an electron acceptor and may also stabilize the conformation of the molecule. Could be involved in hydrogenase-linked redox processes. This chain is Rubredoxin (rub), found in Nostoc sp. (strain PCC 7120 / SAG 25.82 / UTEX 2576).